The sequence spans 455 residues: Kynurenine--oxoglutarate transaminase 3 (455 aa).

Gly71 is a binding site for substrate. The residue at position 116 (Lys116) is an N6-acetyllysine; alternate. Position 116 is an N6-succinyllysine; alternate (Lys116). Residue Asn218 participates in substrate binding. Position 280 is an N6-(pyridoxal phosphate)lysine (Lys280). Arg430 serves as a coordination point for substrate.

Belongs to the class-I pyridoxal-phosphate-dependent aminotransferase family. As to quaternary structure, homodimer. The cofactor is pyridoxal 5'-phosphate.

It catalyses the reaction L-kynurenine + 2-oxoglutarate = kynurenate + L-glutamate + H2O. The catalysed reaction is L-kynurenine + glyoxylate = kynurenate + glycine + H2O. It carries out the reaction 3-hydroxy-L-kynurenine + glyoxylate = xanthurenate + glycine + H2O. The enzyme catalyses an S-substituted L-cysteine + H2O = a thiol + pyruvate + NH4(+). It functions in the pathway amino-acid degradation; L-kynurenine degradation; kynurenate from L-kynurenine: step 1/2. Its function is as follows. Catalyzes the irreversible transamination of the L-tryptophan metabolite L-kynurenine to form kynurenic acid (KA), an intermediate in the tryptophan catabolic pathway which is also a broad spectrum antagonist of the three ionotropic excitatory amino acid receptors among others. May catalyze the beta-elimination of S-conjugates and Se-conjugates of L-(seleno)cysteine, resulting in the cleavage of the C-S or C-Se bond. Has transaminase activity towards L-kynurenine, tryptophan, phenylalanine, serine, cysteine, methionine, histidine, glutamine and asparagine with glyoxylate as an amino group acceptor (in vitro). Has lower activity with 2-oxoglutarate as amino group acceptor (in vitro). This chain is Kynurenine--oxoglutarate transaminase 3, found in Bos taurus (Bovine).